The primary structure comprises 66 residues: Large ribosomal subunit protein bL35 (66 aa).

Positions 1–15 are enriched in basic residues; that stretch reads MPKMKTKSSAKKRFK. Positions 1 to 32 are disordered; sequence MPKMKTKSSAKKRFKMTATGKVRAGQAGKRHG.

It belongs to the bacterial ribosomal protein bL35 family.

The protein is Large ribosomal subunit protein bL35 of Dinoroseobacter shibae (strain DSM 16493 / NCIMB 14021 / DFL 12).